The chain runs to 261 residues: Kallikrein-1 (261 aa).

The N-terminal stretch at 1–18 (MRFLILFLALSLGGIDAA) is a signal peptide. Residues 19-24 (PPVQSR) constitute a propeptide, activation peptide. The Peptidase S1 domain maps to 25–258 (IVGGFNCEKN…FNTWIRETMA (234 aa)). Intrachain disulfides connect Cys31–Cys173, Cys50–Cys66, Cys152–Cys219, Cys184–Cys198, and Cys209–Cys234. His65 serves as the catalytic Charge relay system. N-linked (GlcNAc...) asparagine glycosylation occurs at Asn102. The Charge relay system role is filled by Asp120. The active-site Charge relay system is Ser213.

This sequence belongs to the peptidase S1 family. Kallikrein subfamily.

The enzyme catalyses Preferential cleavage of Arg-|-Xaa bonds in small molecule substrates. Highly selective action to release kallidin (lysyl-bradykinin) from kininogen involves hydrolysis of Met-|-Xaa or Leu-|-Xaa.. Glandular kallikreins cleave Met-Lys and Arg-Ser bonds in kininogen to release Lys-bradykinin. This Mus musculus (Mouse) protein is Kallikrein-1 (Klk1).